Reading from the N-terminus, the 570-residue chain is MGMWWIVAVAILAHTASAAVREYAWEVEYKFGWPDCKEGMVMAVNGQFPGPTIHALAGDTIVVHLTNKLATEGLVIHWHGIRQLGSPWADGAAGVTQCAISPGETFTYNFTVDKPGTHFYHGHYGMQRSAGLYGSLIIDVAKGKKEPLRYDGEFNLLLSDWWHEDVLSQEIGLSSRPMRWIGEAQSILINGRGQFNCSLAAQFSSTSLPTCTFKEGDQCAPQRLHVEPNKTYRIRLASSTALASLNFAVQGHKLVVVEADGNYITPFTTDDIDIYSGETYSVLLTTDQDPSQNYYITAGVRGRKPNTPPALTVLNYVTAPSSQLPTSPPPETPRWNDFDRSKNFSKKIFAAMGSPSPPETFDERLILLNTQNLIEGFTKWAINNVSLAVPGTPYLGSVKYNLRTGFNRSSPPKDYPVDYDIMTPPRNRNAKQGNVSCVFPFNVTVDVILQNANGLNANASEIHPWHLHGHDFWVLGYGEGKFKPGVDEKTYNLKNPPLRNTVALYPYGWTALRFVTDNPGVWFFHCHIEPHLHMGMGVVFAEGLNRIGKVPDEALGCGLTKQFLMNRNNP.

The first 18 residues, 1 to 18 (MGMWWIVAVAILAHTASA), serve as a signal peptide directing secretion. 2 consecutive Plastocyanin-like domains span residues 33–140 (WPDC…IIDV) and 154–317 (FNLL…LNYV). Disulfide bonds link Cys-36–Cys-219, Cys-98–Cys-557, and Cys-197–Cys-211. The Cu cation site is built by His-77 and His-79. Asn-109 carries an N-linked (GlcNAc...) asparagine glycan. The Cu cation site is built by His-121 and His-123. N-linked (GlcNAc...) asparagine glycosylation occurs at Asn-196. N-linked (GlcNAc...) asparagine glycosylation is found at Asn-229, Asn-343, Asn-384, Asn-407, Asn-434, Asn-442, and Asn-458. The Plastocyanin-like 3 domain occupies 426-543 (RNRNAKQGNV…MGMGVVFAEG (118 aa)). The Cu cation site is built by His-463, His-466, His-468, His-525, Cys-526, His-527, His-531, and Met-536.

It belongs to the multicopper oxidase family. As to quaternary structure, dimer. The cofactor is Cu cation.

The protein resides in the secreted. The enzyme catalyses 4 L-ascorbate + O2 = 4 monodehydro-L-ascorbate radical + 2 H2O. It functions in the pathway cofactor degradation; L-ascorbate degradation. Its function is as follows. Ascorbate oxidase involved in a redox system involving ascorbic acid (AsA). The oxidation of AsA represses responses to high salinity and oxidative stress conditions such as vegetative growth and seed production reductions. Negative regulator of defense responses toward incompatible Turnip mosaic virus (TuMV strain UK1) by preventing jasmonic acid (JA)- dependent accumulation of ascorbic acid (AsA, AS) and dehydroascobic acid (DHA). This Brassica rapa subsp. pekinensis (Chinese cabbage) protein is L-ascorbate oxidase.